The chain runs to 709 residues: Dual specificity calcium/calmodulin-dependent 3',5'-cyclic nucleotide phosphodiesterase 1C (709 aa).

M1 is subject to N-acetylmethionine. The segment at 123–146 (EKPRFKSIVHAVQAGIFVERMYRR) is calmodulin-binding. Residues 151-528 (VGLSYPPAVI…ERWRAKVPKE (378 aa)) enclose the PDEase domain. Catalysis depends on H228, which acts as the Proton donor. H232, H268, D269, and D376 together coordinate Zn(2+). Residue D269 coordinates Mg(2+). 2 disordered regions span residues 453-495 (LIDE…APIN) and 523-650 (AKVP…TCRL). Residues 483 to 495 (VKTSGSEGSAPIN) show a composition bias toward polar residues. Basic and acidic residues predominate over residues 523–556 (AKVPKEEKAKKEAEEKARLAAEEQQKEMEAKSQA). The span at 571–581 (ETKNQVNGTRA) shows a compositional bias: polar residues. 2 stretches are compositionally biased toward basic and acidic residues: residues 582–598 (NKSD…EKSS) and 606–633 (DFKD…DGTK).

The protein belongs to the cyclic nucleotide phosphodiesterase family. PDE1 subfamily. As to quaternary structure, homodimer. The cofactor is Zn(2+). It depends on Mg(2+) as a cofactor. As to expression, isoform PDE1C2 is present in the heart and brain and, at lower levels in the lung, liver, kidney and skeletal muscle. Isoform PDE1C1 is expressed in the heart and brain and, at lower levels in lung. Also expressed at low levels in uterus and testis.

Its subcellular location is the lysosome. The catalysed reaction is a nucleoside 3',5'-cyclic phosphate + H2O = a nucleoside 5'-phosphate + H(+). It catalyses the reaction 3',5'-cyclic GMP + H2O = GMP + H(+). The enzyme catalyses 3',5'-cyclic AMP + H2O = AMP + H(+). Type I PDE are activated by the binding of calmodulin in the presence of Ca(2+). In terms of biological role, calmodulin-dependent cyclic nucleotide phosphodiesterase with a dual specificity for the second messengers cAMP and cGMP, which are key regulators of many important physiological processes. Has a high affinity for both cAMP and cGMP. Modulates the amplitude and duration of the cAMP signal in sensory cilia in response to odorant stimulation, hence contributing to the generation of action potentials. Regulates smooth muscle cell proliferation. Regulates the stability of growth factor receptors, including PDGFRB. The chain is Dual specificity calcium/calmodulin-dependent 3',5'-cyclic nucleotide phosphodiesterase 1C from Homo sapiens (Human).